We begin with the raw amino-acid sequence, 31 residues long: Photosystem II reaction center protein T (31 aa).

The chain crosses the membrane as a helical span at residues 3 to 23; that stretch reads SVAYILVLTMTLAVLFFAIAF.

The protein belongs to the PsbT family. As to quaternary structure, PSII is composed of 1 copy each of membrane proteins PsbA, PsbB, PsbC, PsbD, PsbE, PsbF, PsbH, PsbI, PsbJ, PsbK, PsbL, PsbM, PsbT, PsbX, PsbY, PsbZ, Psb30/Ycf12, peripheral proteins PsbO, CyanoQ (PsbQ), PsbU, PsbV and a large number of cofactors. It forms dimeric complexes.

The protein localises to the cellular thylakoid membrane. In terms of biological role, found at the monomer-monomer interface of the photosystem II (PS II) dimer, plays a role in assembly and dimerization of PSII. PSII is a light-driven water plastoquinone oxidoreductase, using light energy to abstract electrons from H(2)O, generating a proton gradient subsequently used for ATP formation. This Rippkaea orientalis (strain PCC 8801 / RF-1) (Cyanothece sp. (strain PCC 8801)) protein is Photosystem II reaction center protein T.